The primary structure comprises 493 residues: Lysostaphin (493 aa).

The N-terminal stretch at 1–23 (MKKTKNNYYTRPLAIGLSTFALA) is a signal peptide. Residues 24–247 (SIVYGGIQNE…ALVQNRTALR (224 aa)) constitute a propeptide that is removed on maturation. A run of 14 repeats spans residues 49–61 (AEVE…VENT), 62–74 (AEVE…VENT), 75–87 (AEVE…VENT), 88–100 (AEVE…VENT), 101–113 (AEVE…VENT), 114–126 (AEVE…VENT), 127–139 (AEVE…VENT), 140–152 (AEVE…VENT), 153–165 (AEVE…VENT), 166–178 (AEVE…VENT), 179–191 (AEVE…VENT), 192–204 (AEVE…VENT), 205–217 (AEVE…VENT), and 218–230 (AEVE…VENT). A 15 X 13 AA approximate tandem repeats of A-E-V-E-T-S-K-A-P-V-E-N-T region spans residues 49-243 (AEVETSKAPV…ETSKALVQNR (195 aa)). Residues 52–232 (ETSKAPVENT…SKAPVENTAE (181 aa)) are disordered. The 15; approximate repeat unit spans residues 231–243 (AEVETSKALVQNR). Residues histidine 279 and aspartate 283 each coordinate Zn(2+). Histidine 360 is a catalytic residue. Histidine 362 lines the Zn(2+) pocket. The region spanning 413–481 (SESASFTPNT…YLPVRTWNKS (69 aa)) is the SH3b domain.

This sequence belongs to the peptidase M23B family. As to quaternary structure, monomer. The cofactor is Zn(2+).

It is found in the secreted. The catalysed reaction is Hydrolysis of the -Gly-|-Gly- bond in the pentaglycine inter-peptide link joining staphylococcal cell wall peptidoglycans.. Functionally, lyses staphylococcal cells by hydrolyzing the polyglycine interpeptide bridges of the peptidoglycan. The polypeptide is Lysostaphin (lss) (Staphylococcus simulans).